The chain runs to 379 residues: Probable leucine aminopeptidase ARB_01443 (379 aa).

The N-terminal stretch at 1-18 (MKIATLAVVSAFAATAIA) is a signal peptide. 2 residues coordinate Zn(2+): H182 and D201. Residues N202 and N226 are each glycosylated (N-linked (GlcNAc...) asparagine). Zn(2+) contacts are provided by E240 and D267. C312 and C316 are joined by a disulfide. H345 contacts Zn(2+).

The protein belongs to the peptidase M28 family. M28E subfamily. As to quaternary structure, monomer. It depends on Zn(2+) as a cofactor.

The protein localises to the secreted. In terms of biological role, probable extracellular aminopeptidase which contributes to pathogenicity. This is Probable leucine aminopeptidase ARB_01443 from Arthroderma benhamiae (strain ATCC MYA-4681 / CBS 112371) (Trichophyton mentagrophytes).